The sequence spans 297 residues: Mitochondrial glycine transporter (297 aa).

Solcar repeat units follow at residues 5–81 (TGHL…MRTA), 105–189 (LSMY…LKHT), and 211–295 (TSTA…LIKH). 6 helical membrane-spanning segments follow: residues 8-33 (LIGG…TRFQ), 56-82 (GTLP…RTAL), 111-136 (LVTG…VRYE), 164-187 (GFGP…EKLK), 215-241 (INST…KTRM), and 270-288 (GLSM…AWGI).

This sequence belongs to the mitochondrial carrier (TC 2.A.29) family. SLC25A38 subfamily.

It localises to the mitochondrion inner membrane. The enzyme catalyses glycine(in) = glycine(out). Mitochondrial glycine transporter that imports glycine into the mitochondrial matrix. Plays an important role in providing glycine for the first enzymatic step in heme biosynthesis, the condensation of glycine with succinyl-CoA to produce 5-aminolevulinate (ALA) in the mitochondrial matrix. The polypeptide is Mitochondrial glycine transporter (Candida glabrata (strain ATCC 2001 / BCRC 20586 / JCM 3761 / NBRC 0622 / NRRL Y-65 / CBS 138) (Yeast)).